A 578-amino-acid chain; its full sequence is Arginine--tRNA ligase (578 aa).

The short motif at 125-135 (PNVAKKMHVGH) is the 'HIGH' region element.

It belongs to the class-I aminoacyl-tRNA synthetase family. As to quaternary structure, monomer.

The protein resides in the cytoplasm. The catalysed reaction is tRNA(Arg) + L-arginine + ATP = L-arginyl-tRNA(Arg) + AMP + diphosphate. The chain is Arginine--tRNA ligase from Buchnera aphidicola subsp. Baizongia pistaciae (strain Bp).